Here is a 369-residue protein sequence, read N- to C-terminus: MSSEDIDKHVLRKYEVLQKIGKGAYGIVWKAIDKKTKQTVALKKIFDAFQNATDAQRTFREIMFLQELHGHENIIKLLNVIKADNDRDIYLVFEHMETDLHAVIRAKILEEIHKQYTIYQLLKALKYMHSANVLHRDIKPSNLLLNSECLVKVADFGLARSITSLESIAEANPVLTEYVATRWYRAPEILLGSTKYTKGVDMWSIGCILGELLGEKAMFPGNSTMNQLDLIIEVTGRPSAEDIEAIKSPFAGTMLESLPPSNPRSLSDMYPSASVDALDLLKKLLQFNPDKRITAEEALAHPFVTQFHNPAEEPHFDRIIKISIDDGQKFPIAEYRNRLYNDIIKKKKEERKKQTNPTKPDTTAPTLST.

The 291-residue stretch at 14–304 (YEVLQKIGKG…AEEALAHPFV (291 aa)) folds into the Protein kinase domain. Residues 20–28 (IGKGAYGIV) and Lys-43 contribute to the ATP site. Asp-137 acts as the Proton acceptor in catalysis. The residue at position 176 (Thr-176) is a Phosphothreonine. Residues 176 to 178 (TEY) carry the TXY motif. A Phosphotyrosine modification is found at Tyr-178. A disordered region spans residues 346 to 369 (KKKEERKKQTNPTKPDTTAPTLST). The segment covering 355–369 (TNPTKPDTTAPTLST) has biased composition (polar residues).

Belongs to the protein kinase superfamily. CMGC Ser/Thr protein kinase family. MAP kinase subfamily. It depends on Mg(2+) as a cofactor. Dually phosphorylated on Thr-176 and Tyr-178, which activates the enzyme.

It carries out the reaction L-seryl-[protein] + ATP = O-phospho-L-seryl-[protein] + ADP + H(+). The catalysed reaction is L-threonyl-[protein] + ATP = O-phospho-L-threonyl-[protein] + ADP + H(+). Activated by tyrosine and threonine phosphorylation. Its function is as follows. Implicated in the relay of the cAMP chemotactic signal and cell differentiation. Important for receptor-mediated activation of adenylyl cyclase. The chain is Extracellular signal-regulated kinase 2 (erkB) from Dictyostelium discoideum (Social amoeba).